A 153-amino-acid chain; its full sequence is Aspartate carbamoyltransferase regulatory chain (153 aa).

C109, C114, C138, and C141 together coordinate Zn(2+).

The protein belongs to the PyrI family. In terms of assembly, contains catalytic and regulatory chains. It depends on Zn(2+) as a cofactor.

Functionally, involved in allosteric regulation of aspartate carbamoyltransferase. In Cronobacter sakazakii (strain ATCC BAA-894) (Enterobacter sakazakii), this protein is Aspartate carbamoyltransferase regulatory chain.